Consider the following 351-residue polypeptide: Xaa-Pro dipeptidase (351 aa).

5 residues coordinate Co(2+): D212, D223, H287, E316, and E330.

It belongs to the peptidase M24B family. Archaeal-type prolidase subfamily. In terms of assembly, homodimer. It depends on Co(2+) as a cofactor.

Its subcellular location is the cytoplasm. The catalysed reaction is Xaa-L-Pro dipeptide + H2O = an L-alpha-amino acid + L-proline. In terms of biological role, splits dipeptides with a prolyl in the C-terminal position and a nonpolar amino acid at the N-terminal position. The chain is Xaa-Pro dipeptidase (pepQ) from Pyrococcus horikoshii (strain ATCC 700860 / DSM 12428 / JCM 9974 / NBRC 100139 / OT-3).